Consider the following 482-residue polypeptide: MEDLETRCASLRTEIAAAEAQLTKLKRELHEAEGAALRAQSQKTASANATTGQRTKSKWPLHGEEYRRYGRQMIVPQFGLQGQLKLRDAKVLIVGAGGLGCPAALYLAGAGVGTIGLVDGDTVEASNLHRQVLHRSRNVGKLKVDSAIEYLRELNPHPTYIAHQAHLTPREAPDIFKDYDLILDCTDNPATRYLISDTAVLLGKPLVSASALRTEGQLMVLNNPPQPPGDKTGGPCYRCVFPKPPPANSVTSCADGGILGPVVGTMGVLQASEAIKVLTSAGESVEATPPSLLIFSAYSSPQFRTIKLRSRRPNCAVCSAEATVTLESVRSGSMDYVFFCGTVDPADILSPEERISPSEYGNVDSAGAQRHIIDVREKVQFDICSLENSINIPMSTILASAYSAPTLDADEPKRLPSWLPPEVAHESNKPIYVVCRQGNDSQTVVRKLKELGLDHGGERPVVDIKGGFRSWREQVDPDWPDY.

The interval 33–57 (EGAALRAQSQKTASANATTGQRTKS) is disordered. Residues 39–54 (AQSQKTASANATTGQR) show a composition bias toward polar residues. ATP contacts are provided by residues glycine 98, aspartate 119, 126–130 (SNLHR), lysine 143, and 187–188 (DN). Cysteine 236 and cysteine 239 together coordinate Zn(2+). Residue cysteine 253 is the Glycyl thioester intermediate; for adenylyltransferase activity of the active site. Zn(2+) is bound by residues cysteine 315 and cysteine 318. Positions 366 to 480 (AGAQRHIIDV…WREQVDPDWP (115 aa)) constitute a Rhodanese domain. Cysteine 435 (cysteine persulfide intermediate; for sulfurtransferase activity) is an active-site residue.

The protein in the N-terminal section; belongs to the HesA/MoeB/ThiF family. UBA4 subfamily. The cofactor is Zn(2+).

It localises to the cytoplasm. Its subcellular location is the cytosol. The enzyme catalyses [molybdopterin-synthase sulfur-carrier protein]-C-terminal Gly-Gly + ATP + H(+) = [molybdopterin-synthase sulfur-carrier protein]-C-terminal Gly-Gly-AMP + diphosphate. It carries out the reaction [molybdopterin-synthase sulfur-carrier protein]-C-terminal Gly-Gly-AMP + S-sulfanyl-L-cysteinyl-[cysteine desulfurase] + AH2 = [molybdopterin-synthase sulfur-carrier protein]-C-terminal-Gly-aminoethanethioate + L-cysteinyl-[cysteine desulfurase] + A + AMP + 2 H(+). It participates in tRNA modification; 5-methoxycarbonylmethyl-2-thiouridine-tRNA biosynthesis. The protein operates within cofactor biosynthesis; molybdopterin biosynthesis. In terms of biological role, plays a central role in 2-thiolation of mcm(5)S(2)U at tRNA wobble positions of cytosolic tRNA(Lys), tRNA(Glu) and tRNA(Gln). Also essential during biosynthesis of the molybdenum cofactor. Acts by mediating the C-terminal thiocarboxylation of sulfur carriers urm1 and mocs2a. Its N-terminus first activates urm1 and mocs2a as acyl-adenylates (-COAMP), then the persulfide sulfur on the catalytic cysteine is transferred to urm1 and mocs2a to form thiocarboxylation (-COSH) of their C-terminus. The reaction probably involves hydrogen sulfide that is generated from the persulfide intermediate and that acts as a nucleophile towards urm1 and mocs2a. Subsequently, a transient disulfide bond is formed. Does not use thiosulfate as sulfur donor; nfs1 probably acting as a sulfur donor for thiocarboxylation reactions. The chain is Adenylyltransferase and sulfurtransferase uba4 from Emericella nidulans (strain FGSC A4 / ATCC 38163 / CBS 112.46 / NRRL 194 / M139) (Aspergillus nidulans).